A 201-amino-acid chain; its full sequence is Recombination protein RecR (201 aa).

The C4-type zinc-finger motif lies at 57-72; sequence CSDCRTFTEQDVCAIC. The region spanning 81–176 is the Toprim domain; it reads GLVCVVESPA…MASRIAHGVP (96 aa).

It belongs to the RecR family.

May play a role in DNA repair. It seems to be involved in an RecBC-independent recombinational process of DNA repair. It may act with RecF and RecO. This chain is Recombination protein RecR, found in Pectobacterium atrosepticum (strain SCRI 1043 / ATCC BAA-672) (Erwinia carotovora subsp. atroseptica).